We begin with the raw amino-acid sequence, 630 residues long: 1-deoxy-D-xylulose-5-phosphate synthase (630 aa).

Thiamine diphosphate-binding positions include H72 and 113-115; that span reads GHS. D144 contributes to the Mg(2+) binding site. Residues 145–146, N173, Y284, and E367 each bind thiamine diphosphate; that span reads GA. N173 serves as a coordination point for Mg(2+).

The protein belongs to the transketolase family. DXPS subfamily. Homodimer. Mg(2+) serves as cofactor. Thiamine diphosphate is required as a cofactor.

The enzyme catalyses D-glyceraldehyde 3-phosphate + pyruvate + H(+) = 1-deoxy-D-xylulose 5-phosphate + CO2. The protein operates within metabolic intermediate biosynthesis; 1-deoxy-D-xylulose 5-phosphate biosynthesis; 1-deoxy-D-xylulose 5-phosphate from D-glyceraldehyde 3-phosphate and pyruvate: step 1/1. In terms of biological role, catalyzes the acyloin condensation reaction between C atoms 2 and 3 of pyruvate and glyceraldehyde 3-phosphate to yield 1-deoxy-D-xylulose-5-phosphate (DXP). In Bacillus cereus (strain ATCC 10987 / NRS 248), this protein is 1-deoxy-D-xylulose-5-phosphate synthase.